The sequence spans 1215 residues: Reverse gyrase 2 (1215 aa).

The RG N-terminal-type zinc-finger motif lies at 3–44 (GGVNAVYMGLCYNCGGNIDEDRLEKGLPCARCLPSPPRRATP). Zn(2+)-binding residues include Cys-13, Cys-16, Cys-31, and Cys-34. ATP contacts are provided by residues Gln-89 and 106–113 (APTGVGKS). A Helicase ATP-binding domain is found at 93-249 (AKRLVKGDSF…SLVKARLKLY (157 aa)). A DEAD box motif is present at residues 209-212 (DDVD). Positions 614–1215 (VRVKTTLLVV…TGDVMGQSEA (602 aa)) are topoisomerase I. The Toprim domain maps to 618-783 (TTLLVVESPT…NVRRGRFHEV (166 aa)). Glu-624 lines the Mg(2+) pocket. An RG C-terminal-type zinc finger spans residues 702 to 729 (IKRCLDCGAQHTSSSPFCPRCGSPRQVD). Zn(2+) is bound by residues Cys-705, Cys-708, Cys-719, and Cys-722. Residue Asp-752 participates in Mg(2+) binding. One can recognise a Topo IA-type catalytic domain in the interval 799–1200 (EKSLIEAQKV…SVWRMVDEAV (402 aa)). Residue Tyr-943 is the O-(5'-phospho-DNA)-tyrosine intermediate of the active site.

It in the N-terminal section; belongs to the DEAD box helicase family. DDVD subfamily. The protein in the C-terminal section; belongs to the type IA topoisomerase family. As to quaternary structure, monomer. Zn(2+) is required as a cofactor. Mg(2+) serves as cofactor.

The protein resides in the cytoplasm. It catalyses the reaction ATP + H2O = ADP + phosphate + H(+). Modifies the topological state of DNA by introducing positive supercoils in an ATP-dependent process, increasing the linking number in steps of +1. Binds to single-stranded DNA, transiently cleaves and then rejoins the ends, introducing a positive supercoil in the process. The scissile phosphodiester is attacked by the catalytic tyrosine of the enzyme, resulting in the formation of a DNA-(5'-phosphotyrosyl)-enzyme intermediate. Probably involved in rewinding DNA strands in regions of the chromosome that have opened up to allow replication, transcription, DNA repair and/or for DNA protection. The protein is Reverse gyrase 2 of Aeropyrum pernix (strain ATCC 700893 / DSM 11879 / JCM 9820 / NBRC 100138 / K1).